A 278-amino-acid polypeptide reads, in one-letter code: Shikimate dehydrogenase (NADP(+)) (278 aa).

Shikimate is bound by residues 19-21 (SLS) and Thr66. The Proton acceptor role is filled by Lys70. Positions 91 and 106 each coordinate shikimate. NADP(+) is bound by residues 130-134 (GAGGS), 152-157 (NRTVEK), and Leu222. Tyr224 lines the shikimate pocket. Gly245 is a binding site for NADP(+).

The protein belongs to the shikimate dehydrogenase family. In terms of assembly, homodimer.

The catalysed reaction is shikimate + NADP(+) = 3-dehydroshikimate + NADPH + H(+). Its pathway is metabolic intermediate biosynthesis; chorismate biosynthesis; chorismate from D-erythrose 4-phosphate and phosphoenolpyruvate: step 4/7. Its function is as follows. Involved in the biosynthesis of the chorismate, which leads to the biosynthesis of aromatic amino acids. Catalyzes the reversible NADPH linked reduction of 3-dehydroshikimate (DHSA) to yield shikimate (SA). The chain is Shikimate dehydrogenase (NADP(+)) from Methanococcus aeolicus (strain ATCC BAA-1280 / DSM 17508 / OCM 812 / Nankai-3).